Here is a 327-residue protein sequence, read N- to C-terminus: GMP reductase (327 aa).

Residue C176 is the Thioimidate intermediate of the active site. NADP(+) is bound at residue 205 to 228 (IIADGGIRTHGDIAKSIRFGASMV).

It belongs to the IMPDH/GMPR family. GuaC type 2 subfamily.

The enzyme catalyses IMP + NH4(+) + NADP(+) = GMP + NADPH + 2 H(+). In terms of biological role, catalyzes the irreversible NADPH-dependent deamination of GMP to IMP. It functions in the conversion of nucleobase, nucleoside and nucleotide derivatives of G to A nucleotides, and in maintaining the intracellular balance of A and G nucleotides. This is GMP reductase from Streptococcus agalactiae serotype III (strain NEM316).